The chain runs to 376 residues: tRNA-specific 2-thiouridylase MnmA (376 aa).

ATP-binding positions include 9–16 (AMSGGIDS) and methionine 35. The Nucleophile role is filled by cysteine 105. Cysteine 105 and cysteine 202 are disulfide-bonded. Glycine 129 serves as a coordination point for ATP. An interaction with tRNA region spans residues 151–153 (KDQ). Catalysis depends on cysteine 202, which acts as the Cysteine persulfide intermediate. The interval 312 to 313 (RY) is interaction with tRNA.

This sequence belongs to the MnmA/TRMU family.

The protein resides in the cytoplasm. The catalysed reaction is S-sulfanyl-L-cysteinyl-[protein] + uridine(34) in tRNA + AH2 + ATP = 2-thiouridine(34) in tRNA + L-cysteinyl-[protein] + A + AMP + diphosphate + H(+). Functionally, catalyzes the 2-thiolation of uridine at the wobble position (U34) of tRNA, leading to the formation of s(2)U34. This is tRNA-specific 2-thiouridylase MnmA from Amoebophilus asiaticus (strain 5a2).